Reading from the N-terminus, the 491-residue chain is Protein DETOXIFICATION 28 (491 aa).

A run of 12 helical transmembrane segments spans residues 47 to 67 (IVGP…ITQA), 77 to 97 (LAAI…LFIG), 127 to 147 (IVLF…TPIL), 160 to 180 (SGII…FFPI), 192 to 212 (VIAI…WLFV), 228 to 248 (VSWW…GCPL), 272 to 292 (GIMV…TGNL), 302 to 322 (MSIC…FFAG), 352 to 372 (IIGI…GWMF), 387 to 407 (ILLS…GVAV), 414 to 434 (LVAF…GIVM), and 444 to 464 (GIWA…LIFI).

This sequence belongs to the multi antimicrobial extrusion (MATE) (TC 2.A.66.1) family.

It localises to the membrane. This is Protein DETOXIFICATION 28 from Arabidopsis thaliana (Mouse-ear cress).